We begin with the raw amino-acid sequence, 43 residues long: ALSCGTVNSNLAACIGYLTQNAPLARGCCTGVTNLNNMAXTTP.

It belongs to the plant LTP family. Homodimer.

Plant non-specific lipid-transfer proteins transfer phospholipids as well as galactolipids across membranes. May play a role in wax or cutin deposition in the cell walls of expanding epidermal cells and certain secretory tissues. This isoform inhibits the hyphal growth of several fungi in vitro. The sequence is that of Seed non-specific lipid transfer protein-like from Raphanus sativus (Radish).